Consider the following 453-residue polypeptide: tRNA-2-methylthio-N(6)-dimethylallyladenosine synthase (453 aa).

The 119-residue stretch at 17-135 (GTFFIETWGC…FPEYLNRAKQ (119 aa)) folds into the MTTase N-terminal domain. Residues Cys-26, Cys-62, Cys-96, Cys-172, Cys-176, and Cys-179 each coordinate [4Fe-4S] cluster. One can recognise a Radical SAM core domain in the interval 158–388 (RKSSTKAFVT…VEVVNKSCEK (231 aa)). Residues 391–453 (KKYQDRIVKV…LSFSLEGEEV (63 aa)) enclose the TRAM domain.

Belongs to the methylthiotransferase family. MiaB subfamily. As to quaternary structure, monomer. It depends on [4Fe-4S] cluster as a cofactor.

It localises to the cytoplasm. It catalyses the reaction N(6)-dimethylallyladenosine(37) in tRNA + (sulfur carrier)-SH + AH2 + 2 S-adenosyl-L-methionine = 2-methylsulfanyl-N(6)-dimethylallyladenosine(37) in tRNA + (sulfur carrier)-H + 5'-deoxyadenosine + L-methionine + A + S-adenosyl-L-homocysteine + 2 H(+). Functionally, catalyzes the methylthiolation of N6-(dimethylallyl)adenosine (i(6)A), leading to the formation of 2-methylthio-N6-(dimethylallyl)adenosine (ms(2)i(6)A) at position 37 in tRNAs that read codons beginning with uridine. The protein is tRNA-2-methylthio-N(6)-dimethylallyladenosine synthase of Clostridium tetani (strain Massachusetts / E88).